A 132-amino-acid polypeptide reads, in one-letter code: Small ribosomal subunit protein uS8 (132 aa).

Belongs to the universal ribosomal protein uS8 family. Part of the 30S ribosomal subunit. Contacts proteins S5 and S12.

In terms of biological role, one of the primary rRNA binding proteins, it binds directly to 16S rRNA central domain where it helps coordinate assembly of the platform of the 30S subunit. This Leptospira biflexa serovar Patoc (strain Patoc 1 / Ames) protein is Small ribosomal subunit protein uS8.